The chain runs to 180 residues: ATP synthase subunit delta (180 aa).

This sequence belongs to the ATPase delta chain family. In terms of assembly, F-type ATPases have 2 components, F(1) - the catalytic core - and F(0) - the membrane proton channel. F(1) has five subunits: alpha(3), beta(3), gamma(1), delta(1), epsilon(1). F(0) has three main subunits: a(1), b(2) and c(10-14). The alpha and beta chains form an alternating ring which encloses part of the gamma chain. F(1) is attached to F(0) by a central stalk formed by the gamma and epsilon chains, while a peripheral stalk is formed by the delta and b chains.

It is found in the cell membrane. In terms of biological role, f(1)F(0) ATP synthase produces ATP from ADP in the presence of a proton or sodium gradient. F-type ATPases consist of two structural domains, F(1) containing the extramembraneous catalytic core and F(0) containing the membrane proton channel, linked together by a central stalk and a peripheral stalk. During catalysis, ATP synthesis in the catalytic domain of F(1) is coupled via a rotary mechanism of the central stalk subunits to proton translocation. Its function is as follows. This protein is part of the stalk that links CF(0) to CF(1). It either transmits conformational changes from CF(0) to CF(1) or is implicated in proton conduction. The chain is ATP synthase subunit delta from Dehalococcoides mccartyi (strain ATCC BAA-2266 / KCTC 15142 / 195) (Dehalococcoides ethenogenes (strain 195)).